Reading from the N-terminus, the 158-residue chain is Snaclec coagulation factor X-activating enzyme light chain 2 (158 aa).

Positions 1 to 23 (MGRSISVSFGLLAVFLSLSGTGA) are cleaved as a signal peptide. Disulfide bonds link cysteine 27–cysteine 38, cysteine 55–cysteine 152, and cysteine 127–cysteine 144. The C-type lectin domain occupies 34–153 (YRYFCYRVFK…CEEPYPFVCK (120 aa)).

The protein belongs to the snaclec family. Heterotrimer; disulfide-linked. The heterotrimer consists of 1 heavy chain (a metalloproteinase) and 2 light chains: LC1 and LC2. In terms of tissue distribution, expressed by the venom gland.

The protein localises to the secreted. Its function is as follows. Regulatory subunit of the blood coagulation factor X-activating enzyme. Activates coagulation factor X (F10) by cleaving the Arg-Ile bond at position 234, activates coagulation factor IX (F9) by cleaving the Arg-Val bond at position 226 and is also able to activate protein C (PROC). May serve as an exosite by which the enzyme recognizes and binds to the Gla domain of factor X (F10) in a calcium-dependent manner. This Macrovipera lebetinus (Levantine viper) protein is Snaclec coagulation factor X-activating enzyme light chain 2 (LC2).